We begin with the raw amino-acid sequence, 163 residues long: Lipoprotein signal peptidase (163 aa).

The next 4 helical transmembrane spans lie at 9-29 (YLAI…SALS), 39-59 (VLPF…SFLA), 67-87 (WFFT…LYKS), and 92-112 (LLCI…LDRV). Catalysis depends on residues Asp119 and Asp137. The chain crosses the membrane as a helical span at residues 130 to 150 (WPAFNIADSAICVGAALIIWG).

The protein belongs to the peptidase A8 family.

It is found in the cell inner membrane. It catalyses the reaction Release of signal peptides from bacterial membrane prolipoproteins. Hydrolyzes -Xaa-Yaa-Zaa-|-(S,diacylglyceryl)Cys-, in which Xaa is hydrophobic (preferably Leu), and Yaa (Ala or Ser) and Zaa (Gly or Ala) have small, neutral side chains.. It participates in protein modification; lipoprotein biosynthesis (signal peptide cleavage). In terms of biological role, this protein specifically catalyzes the removal of signal peptides from prolipoproteins. This Polynucleobacter necessarius subsp. necessarius (strain STIR1) protein is Lipoprotein signal peptidase.